The following is a 260-amino-acid chain: OCIA domain-containing protein 1 (260 aa).

In terms of domain architecture, OCIA spans M1–E110. Positions D146–D260 are disordered. Residues P155–D164 show a composition bias toward polar residues. Over residues E205–Y215 the composition is skewed to basic and acidic residues.

It belongs to the OCIAD1 family.

The chain is OCIA domain-containing protein 1 from Drosophila pseudoobscura pseudoobscura (Fruit fly).